The primary structure comprises 196 residues: ECF RNA polymerase sigma factor SigM (196 aa).

The segment at 39–105 (LFRRHHRQLH…ACLDRLRRAK (67 aa)) is sigma-70 factor domain-2. Residues 63–66 (DALQ) carry the Interaction with polymerase core subunit RpoC motif. Residues 130-181 (AVQRALMRLPVEQRAAVVAVDMQGYSIADTARMLGVAEGTVKSRCARARARL) form a sigma-70 factor domain-4 region. The H-T-H motif DNA-binding region spans 156-175 (IADTARMLGVAEGTVKSRCA).

It belongs to the sigma-70 factor family. ECF subfamily. Interacts transiently with the RNA polymerase catalytic core formed by RpoA, RpoB, RpoC and RpoZ (2 alpha, 1 beta, 1 beta' and 1 omega subunit) to form the RNA polymerase holoenzyme that can initiate transcription. Interacts (via sigma-70 factor domain 4) with anti-sigma-M factor RsmA.

Sigma factors are initiation factors that promote the attachment of RNA polymerase to specific initiation sites and are then released. Extracytoplasmic function (ECF) sigma factors are held in an inactive form by an anti-sigma factor until released by regulated intramembrane proteolysis. This Mycobacterium tuberculosis (strain ATCC 35801 / TMC 107 / Erdman) protein is ECF RNA polymerase sigma factor SigM (sigM).